The primary structure comprises 420 residues: Glucose-1-phosphate adenylyltransferase (420 aa).

Alpha-D-glucose 1-phosphate is bound by residues Tyr107, Gly173, 188 to 189 (EK), and Ser206.

This sequence belongs to the bacterial/plant glucose-1-phosphate adenylyltransferase family. In terms of assembly, homotetramer.

It carries out the reaction alpha-D-glucose 1-phosphate + ATP + H(+) = ADP-alpha-D-glucose + diphosphate. Its pathway is glycan biosynthesis; glycogen biosynthesis. Functionally, involved in the biosynthesis of ADP-glucose, a building block required for the elongation reactions to produce glycogen. Catalyzes the reaction between ATP and alpha-D-glucose 1-phosphate (G1P) to produce pyrophosphate and ADP-Glc. The chain is Glucose-1-phosphate adenylyltransferase from Shewanella sp. (strain ANA-3).